The chain runs to 203 residues: 3-isopropylmalate dehydratase small subunit (203 aa).

It belongs to the LeuD family. LeuD type 1 subfamily. Heterodimer of LeuC and LeuD.

It carries out the reaction (2R,3S)-3-isopropylmalate = (2S)-2-isopropylmalate. The protein operates within amino-acid biosynthesis; L-leucine biosynthesis; L-leucine from 3-methyl-2-oxobutanoate: step 2/4. Catalyzes the isomerization between 2-isopropylmalate and 3-isopropylmalate, via the formation of 2-isopropylmaleate. This Symbiobacterium thermophilum (strain DSM 24528 / JCM 14929 / IAM 14863 / T) protein is 3-isopropylmalate dehydratase small subunit.